The following is a 664-amino-acid chain: Sorbicillinoid biosynthetic cluster transcription factor sor3 (664 aa).

Positions 40–67 (CQSCRASKVKCDGGRPVCARCQKRGRAC) form a DNA-binding region, zn(2)-C6 fungal-type. Residues 68–102 (SYSQHDAASPRGRGRQRAKAPTRQPRPIRSRASVE) are disordered.

It is found in the nucleus. Its function is as follows. Transcription factor that acts in concert with sor4 which is a transcriptional activator of the gene cluster that mediates the biosynthesis of sorbicillinoids, a diverse group of yellow secondary metabolites that restrict growth of competing pathogenic fungi but not of bacteria. Regulates the cluster genes in a light dependent manner. Also plays a direct or indirect role in regulation of paracelsin biosynthesis and cellulase gene expression. This Hypocrea jecorina (strain QM6a) (Trichoderma reesei) protein is Sorbicillinoid biosynthetic cluster transcription factor sor3.